We begin with the raw amino-acid sequence, 501 residues long: G protein-activated inward rectifier potassium channel 1 (501 aa).

The tract at residues 1-40 (MSALRRKFGDDYQVVTTSSSGSGLQPQGPGQGPQQQLVPK) is disordered. At 1–80 (MSALRRKFGD…LFTTLVDLKW (80 aa)) the chain is on the cytoplasmic side. Positions 18 to 37 (SSSGSGLQPQGPGQGPQQQL) are enriched in low complexity. A helical membrane pass occupies residues 81-105 (RWNLFIFILTYTVAWLFMASMWWVI). The Extracellular portion of the chain corresponds to 106–129 (AYTRGDLNKAHVGNYTPCVANVYN). N119 carries N-linked (GlcNAc...) asparagine glycosylation. Residues 130–141 (FPSAFLFFIETE) constitute an intramembrane region (helical; Pore-forming). Positions 142-148 (ATIGYGY) form an intramembrane region, pore-forming. Residues 143-148 (TIGYGY) carry the Selectivity filter motif. Over 149-157 (RYITDKCPE) the chain is Extracellular. The helical transmembrane segment at 158-179 (GIILFLFQSILGSIVDAFLIGC) threads the bilayer. The Cytoplasmic portion of the chain corresponds to 180 to 501 (MFIKMSQPKK…LRKMNSDRFT (322 aa)). The polyphosphoinositide (PIP2)-binding stretch occupies residues 182 to 209 (IKMSQPKKRAETLMFSEHAVISMRDGKL). Residues S385 and S424 each carry the phosphoserine modification. Positions 456–467 (TKMLSDPMSQSV) are enriched in polar residues. The segment at 456-501 (TKMLSDPMSQSVADLPPKLQKMAGGPTRMEGNLPAKLRKMNSDRFT) is disordered.

Belongs to the inward rectifier-type potassium channel (TC 1.A.2.1) family. KCNJ3 subfamily. In terms of assembly, associates with KCNJ5/GIRK4 or KCNJ6/GIRK2 to form a G-protein activated heteromultimer pore-forming unit. The resulting inward current is much larger. Associates with KCNJ9/GIRK3 to form a G-protein activated heteromultimer pore-forming unit.

It is found in the membrane. The enzyme catalyses K(+)(in) = K(+)(out). With respect to regulation, heteromultimer composed of KCNJ3/GIRK1 and KCNJ5/GIRK4 is activated by phosphatidylinositol 4,5 biphosphate (PtdIns(4,5)P2). Its function is as follows. Inward rectifier potassium channels are characterized by a greater tendency to allow potassium to flow into the cell rather than out of it. Their voltage dependence is regulated by the concentration of extracellular potassium; as external potassium is raised, the voltage range of the channel opening shifts to more positive voltages. The inward rectification is mainly due to the blockage of outward current by internal magnesium. This potassium channel is controlled by G proteins. This receptor plays a crucial role in regulating the heartbeat. Forms a functional channel in association with KCNJ9/GIRK3. This is G protein-activated inward rectifier potassium channel 1 (Kcnj3) from Rattus norvegicus (Rat).